Reading from the N-terminus, the 105-residue chain is MASRIKKGDQVIVIAGKDKGKQGEIIRIDGHRVVVSNVNIVKRHTKPNPQRSISGGLIDREAPIHVSNIQVLNPMTGKGDRVGFKILDDGCKLRIFRSTGEVIGA.

Belongs to the universal ribosomal protein uL24 family. Part of the 50S ribosomal subunit.

Its function is as follows. One of two assembly initiator proteins, it binds directly to the 5'-end of the 23S rRNA, where it nucleates assembly of the 50S subunit. Functionally, one of the proteins that surrounds the polypeptide exit tunnel on the outside of the subunit. In Xylella fastidiosa (strain 9a5c), this protein is Large ribosomal subunit protein uL24.